Reading from the N-terminus, the 465-residue chain is UDP-N-acetylmuramoylalanine--D-glutamate ligase (465 aa).

116 to 122 (GTNGKTT) contributes to the ATP binding site.

The protein belongs to the MurCDEF family.

It localises to the cytoplasm. The catalysed reaction is UDP-N-acetyl-alpha-D-muramoyl-L-alanine + D-glutamate + ATP = UDP-N-acetyl-alpha-D-muramoyl-L-alanyl-D-glutamate + ADP + phosphate + H(+). Its pathway is cell wall biogenesis; peptidoglycan biosynthesis. Its function is as follows. Cell wall formation. Catalyzes the addition of glutamate to the nucleotide precursor UDP-N-acetylmuramoyl-L-alanine (UMA). The sequence is that of UDP-N-acetylmuramoylalanine--D-glutamate ligase from Thermobifida fusca (strain YX).